A 220-amino-acid chain; its full sequence is Small ribosomal subunit protein eS1 (220 aa).

The protein belongs to the eukaryotic ribosomal protein eS1 family.

The protein is Small ribosomal subunit protein eS1 of Pyrobaculum arsenaticum (strain DSM 13514 / JCM 11321 / PZ6).